The sequence spans 444 residues: Phosphatidate cytidylyltransferase 2 (444 aa).

Positions 1-38 (MTELRQRVVREDAPPEDKESESEAKLDGETASDSESRA) are enriched in basic and acidic residues. A disordered region spans residues 1 to 48 (MTELRQRVVREDAPPEDKESESEAKLDGETASDSESRAETAPLPTSVD). Serine 20 bears the Phosphoserine mark. Threonine 30 carries the post-translational modification Phosphothreonine. 3 positions are modified to phosphoserine: serine 32, serine 34, and serine 36. Threonine 50 is modified (phosphothreonine). Helical transmembrane passes span 78-98 (MIAF…MIVM), 129-149 (WYFL…DYFF), 165-185 (HRFI…LSLV), 212-232 (LVIH…SCVI), 261-281 (GFIG…YVMS), and 339-359 (IALS…ASGF).

This sequence belongs to the CDS family. Homodimer. As to expression, ubiquitous. Expressed in the ganglion cell layer and inner nuclear layer of the retina.

It is found in the endoplasmic reticulum membrane. It carries out the reaction a 1,2-diacyl-sn-glycero-3-phosphate + CTP + H(+) = a CDP-1,2-diacyl-sn-glycerol + diphosphate. It catalyses the reaction 1-octadecanoyl-2-(5Z,8Z,11Z,14Z-eicosatetraenoyl)-sn-glycero-3-phosphate + CTP + H(+) = 1-octadecanoyl-2-(5Z,8Z,11Z,14Z-eicosatetraenoyl)-sn-glycero-3-cytidine-5'-diphosphate + diphosphate. The catalysed reaction is 1-octadecanoyl-2-(9Z,12Z-octadecadienoyl)-sn-glycero-3-phosphate + CTP + H(+) = 1-octadecanoyl-2-(9Z,12Z-octadecadienoyl)-sn-glycero-3-cytidine-5'-diphosphate + diphosphate. The enzyme catalyses 1-hexadecanoyl-2-(5Z,8Z,11Z,14Z-eicosatetraenoyl)-sn-glycero-3-phosphate + CTP + H(+) = 1-hexadecanoyl-2-(5Z,8Z,11Z,14Z-eicosatetraenoyl)-sn-glycero-3-cytidine-5'-diphosphate + diphosphate. It carries out the reaction 1,2-di-(5Z,8Z,11Z,14Z)-eicosatetraenoyl-sn-glycero-3-phosphate + CTP + H(+) = 1,2-di-(5Z,8Z,11Z,14Z-eicosatetraenoyl)-sn-glycero-3-cytidine-5'-diphosphate + diphosphate. It catalyses the reaction 1-octadecanoyl-2-(9Z-octadecenoyl)-sn-glycero-3-phosphate + CTP + H(+) = 1-octadecanoyl-2-(9Z-octadecenoyl)-sn-glycero-3-cytidine-5'-diphosphate + diphosphate. The catalysed reaction is 1-octadecanoyl-2-(4Z,7Z,10Z,13Z,16Z,19Z-docosahexaenoyl)-sn-glycero-3-phosphate + CTP + H(+) = 1-octadecanoyl-2-(4Z,7Z,10Z,13Z,16Z,19Z-docosahexaenoyl)-sn-glycero-3-cytidine-5'-diphosphate + diphosphate. The enzyme catalyses 1,2-di-(9Z,12Z-octadecadienoyl)-sn-glycero-3-phosphate + CTP + H(+) = 1,2-di-(9Z,12Z-octadecadienoyl)-sn-glycero-3-cytidine-5'-diphosphate + diphosphate. It carries out the reaction 1,2-di-(9Z-octadecenoyl)-sn-glycero-3-phosphate + CTP + H(+) = 1,2-di-(9Z-octadecenoyl)-sn-glycero-3-cytidine-5'-diphosphate + diphosphate. The protein operates within phospholipid metabolism; CDP-diacylglycerol biosynthesis; CDP-diacylglycerol from sn-glycerol 3-phosphate: step 3/3. Functionally, catalyzes the conversion of phosphatidic acid (PA) to CDP-diacylglycerol (CDP-DAG), an essential intermediate in the synthesis of phosphatidylglycerol, cardiolipin and phosphatidylinositol. Exhibits specificity for the nature of the acyl chains at the sn-1 and sn-2 positions in the substrate, PA and the preferred acyl chain composition is 1-stearoyl-2-arachidonoyl-sn-phosphatidic acid. Plays an important role in regulating the growth and maturation of lipid droplets which are storage organelles at the center of lipid and energy homeostasis. This Mus musculus (Mouse) protein is Phosphatidate cytidylyltransferase 2.